We begin with the raw amino-acid sequence, 619 residues long: Glucokinase regulatory protein (619 aa).

2 SIS domains span residues 90–283 (VQEV…AESN) and 319–498 (TATS…LRGK). 107-109 (CGT) is a keto-D-fructose 6-phosphate binding site. Beta-D-fructose 1-phosphate contacts are provided by residues 109–110 (TS), Glu153, 179–181 (SCG), and Glu347. Keto-D-fructose 6-phosphate-binding positions include 179-183 (SCGLS) and Glu347. Positions 462-464 (ILF) are essential for interaction with GCK. Keto-D-fructose 6-phosphate is bound at residue Lys513. A beta-D-fructose 1-phosphate-binding site is contributed by Lys513.

Belongs to the GCKR family. Interacts (fructose 6-phosphate bound form) with gck.

It localises to the nucleus. Its subcellular location is the cytoplasm. It is found in the mitochondrion. Functionally, regulates glucokinase (gck) by forming an inactive complex with this enzyme. The affinity of gckr for gck is modulated by fructose metabolites: gckr with bound fructose 6-phosphate has increased affinity for gck, while gckr with bound fructose 1-phosphate has strongly decreased affinity for gck and does not inhibit gck activity. This Xenopus laevis (African clawed frog) protein is Glucokinase regulatory protein.